Consider the following 156-residue polypeptide: Large ribosomal subunit protein uL15 (156 aa).

Residues 1–44 (MKLNELRDNPGASPKRTRVGRGPGSGKGKMGGRGIKGQKSRSGV) form a disordered region. Positions 21–35 (RGPGSGKGKMGGRGI) are enriched in gly residues.

It belongs to the universal ribosomal protein uL15 family. As to quaternary structure, part of the 50S ribosomal subunit.

Functionally, binds to the 23S rRNA. This Ruegeria sp. (strain TM1040) (Silicibacter sp.) protein is Large ribosomal subunit protein uL15.